A 260-amino-acid polypeptide reads, in one-letter code: Isoprenyl transferase (260 aa).

Asp-38 is an active-site residue. A Mg(2+)-binding site is contributed by Asp-38. Residues 39 to 42 (GNGR), Trp-43, Arg-51, His-55, and 83 to 85 (STE) contribute to the substrate site. Asn-86 serves as the catalytic Proton acceptor. Residues Trp-87, Arg-89, Arg-206, and 212–214 (RLS) each bind substrate. Glu-225 contacts Mg(2+).

This sequence belongs to the UPP synthase family. In terms of assembly, homodimer. It depends on Mg(2+) as a cofactor.

In terms of biological role, catalyzes the condensation of isopentenyl diphosphate (IPP) with allylic pyrophosphates generating different type of terpenoids. This chain is Isoprenyl transferase, found in Heliobacterium mobile (Heliobacillus mobilis).